A 202-amino-acid polypeptide reads, in one-letter code: MDAKRTPPPPTPPNPNPSVIGSGAAADGGGFGRGEAAAATKHMLAFHFLRALSRIHRATPVTRRTRTIRRAAYSSMARAASPRRAWSRALLGQVRARRSRTLMRRAAVLVRRRVVAAPAPSPASARGVRIIAAGETSAAARAVPPPPRQQGEPPRAEALRRLVPGGAGMEYSSLLEETADYLRSLRAQVQLMQGLVDLFSYQ.

A compositionally biased stretch (pro residues) spans 1–16 (MDAKRTPPPPTPPNPN). Residues 1–33 (MDAKRTPPPPTPPNPNPSVIGSGAAADGGGFGR) form a disordered region. A bHLH domain is found at 136-185 (TSAAARAVPPPPRQQGEPPRAEALRRLVPGGAGMEYSSLLEETADYLRSL).

Belongs to the bHLH protein family. As to quaternary structure, interacts with ILI1. Binds to ILI5/BUL1 and BC1. Interacts with BCL1 and BCL2. Highly expressed in roots and at lower levels in leaf blades, leaf sheaths, lamina joint, stems and panicles.

In terms of biological role, atypical and probable non DNA-binding bHLH transcription factor that acts as a negative regulator of cell elongation and plant development. Binds the transcription factor ILI1 and forms a heterodimer of antagonistic bHLH transcription factors that function downstream of BZR1 to mediate brassinosteroid regulation of cell elongation and lamina inclination. The polypeptide is Transcription factor IBH1 (Oryza sativa subsp. japonica (Rice)).